A 484-amino-acid chain; its full sequence is Cobyric acid synthase (484 aa).

The 188-residue stretch at 251-438 folds into the GATase cobBQ-type domain; that stretch reads ALKVAVPVLS…LHGLFGSDAY (188 aa). Cysteine 333 (nucleophile) is an active-site residue. Histidine 430 is a catalytic residue.

It belongs to the CobB/CobQ family. CobQ subfamily.

The protein operates within cofactor biosynthesis; adenosylcobalamin biosynthesis. Its function is as follows. Catalyzes amidations at positions B, D, E, and G on adenosylcobyrinic A,C-diamide. NH(2) groups are provided by glutamine, and one molecule of ATP is hydrogenolyzed for each amidation. This is Cobyric acid synthase from Sinorhizobium fredii (strain NBRC 101917 / NGR234).